We begin with the raw amino-acid sequence, 207 residues long: Large ribosomal subunit protein uL4 (207 aa).

Positions 49-78 (HAVKNRSAVSGGGRKPWRQKGTGRARQGSI) are disordered.

The protein belongs to the universal ribosomal protein uL4 family. In terms of assembly, part of the 50S ribosomal subunit.

Its function is as follows. One of the primary rRNA binding proteins, this protein initially binds near the 5'-end of the 23S rRNA. It is important during the early stages of 50S assembly. It makes multiple contacts with different domains of the 23S rRNA in the assembled 50S subunit and ribosome. Forms part of the polypeptide exit tunnel. This is Large ribosomal subunit protein uL4 from Streptococcus sanguinis (strain SK36).